Here is a 495-residue protein sequence, read N- to C-terminus: 3-octaprenyl-4-hydroxybenzoate carboxy-lyase (495 aa).

Asn172 lines the Mn(2+) pocket. Residues 175–177 (IYR), 189–191 (RWL), and 194–195 (RG) contribute to the prenylated FMN site. Position 238 (Glu238) interacts with Mn(2+). The active-site Proton donor is Asp287.

This sequence belongs to the UbiD family. In terms of assembly, homohexamer. Prenylated FMN serves as cofactor. Mn(2+) is required as a cofactor.

The protein localises to the cell membrane. It carries out the reaction a 4-hydroxy-3-(all-trans-polyprenyl)benzoate + H(+) = a 2-(all-trans-polyprenyl)phenol + CO2. It functions in the pathway cofactor biosynthesis; ubiquinone biosynthesis. Functionally, catalyzes the decarboxylation of 3-octaprenyl-4-hydroxy benzoate to 2-octaprenylphenol, an intermediate step in ubiquinone biosynthesis. This Edwardsiella ictaluri (strain 93-146) protein is 3-octaprenyl-4-hydroxybenzoate carboxy-lyase.